Consider the following 350-residue polypeptide: MTTTTVTPTPLAEKTALAPKAELHIHIEGSLEPELIFALAERNGVKLAYDSIDALRAAYAFTDLQSFLDIYYAGASVLLHEQDFYDMTMAYVERCLADNVIHSEIFFDPQTHTERGVPIATVVAGIERALADAEKRGMTSKLILCFLRHLSEEDALATFEEALPLFEQYKHRLIGVGLDSSERGHPPSKFERVFAKARALGLKLVAHAGEEGPPSYIYEALDLLKVDRVDHGVRSIEDPALVTRLADSRVALTVCPLSNLKLCVFDDLTKHTLKDLLDRGVAVTVNSDDPAYFGGYVNANYFATIDALKLNDAEVYTIIRNSFEASFVTPEQRSELIAKLDAHWHPSGPH.

Positions 24, 26, and 207 each coordinate Zn(2+). E210 (proton donor) is an active-site residue. Position 288 (D288) interacts with Zn(2+). D289 is a binding site for substrate.

The protein belongs to the metallo-dependent hydrolases superfamily. Adenosine and AMP deaminases family. Adenine deaminase type 2 subfamily. The cofactor is Zn(2+).

The catalysed reaction is adenine + H2O + H(+) = hypoxanthine + NH4(+). Catalyzes the hydrolytic deamination of adenine to hypoxanthine. Plays an important role in the purine salvage pathway and in nitrogen catabolism. The protein is Adenine deaminase of Paraburkholderia phytofirmans (strain DSM 17436 / LMG 22146 / PsJN) (Burkholderia phytofirmans).